Consider the following 365-residue polypeptide: GDSL lipase (365 aa).

The first 27 residues, 1–27 (MAVASRKLGALVLVAVLCLSLPTGCLS), serve as a signal peptide directing secretion. The active-site Nucleophile is Ser-40. N-linked (GlcNAc...) asparagine glycans are attached at residues Asn-189 and Asn-310. Catalysis depends on charge relay system residues Asp-318 and His-321.

The protein belongs to the 'GDSL' lipolytic enzyme family. Restricted to the pericarp during achene maturation. Expressed in the leaves of mature plants and seedlings, as well as in buds and flowers. Present in disk florets.

The protein resides in the secreted. It localises to the extracellular space. The enzyme catalyses (Z,S)-pyrethrolone + (1R,3R)-chrysanthemoyl-CoA = pyrethrin I + CoA. It catalyses the reaction (Z,S)-pyrethrolone + (1R,3R)-pyrethroyl-CoA = pyrethrin II + CoA. The catalysed reaction is (Z,S)-jasmololone + (1R,3R)-chrysanthemoyl-CoA = jasmolin I + CoA. It carries out the reaction (Z,S)-cinerolone + (1R,3R)-chrysanthemoyl-CoA = cinerin I + CoA. The enzyme catalyses (Z,S)-jasmololone + (1R,3R)-pyrethroyl-CoA = jasmolin II + CoA. It catalyses the reaction (Z,S)-cinerolone + (1R,3R)-pyrethroyl-CoA = cinerin II + CoA. It functions in the pathway isoprenoid biosynthesis. Its function is as follows. Component of the monoterpenoid pyrethrins biosynthesis; pyrethrins are widely used plant-derived pesticide. Acyltransferase that catalyzes the esterification of terpene acids and lipid alcohol substrates into pyrethrins; mediates the transfer of a chrysanthemoyl moiety from the coenzyme A (CoA) thio-ester chrysanthemoyl CoA to pyrethrolone, and, to a lower extent, to jasmololone and cinerolone thus producing pyrethrins (e.g. pyrethrin type I). Can also use pyrethroyl CoA as substrate. Also has esterase activity, being able to cleave the ester bond of pyrethrin I, p-nitrophenyl butanoate and p-nitrophenyl octanoate to produce pyrethrolone and p-nitrophenol, respectively. The polypeptide is GDSL lipase (Tanacetum cinerariifolium (Dalmatian daisy)).